Reading from the N-terminus, the 92-residue chain is Beta-2-microglobulin (92 aa).

The Ig-like C1-type domain occupies 2–91; it reads PQIQVYTRHP…VSMKEPKTVN (90 aa). Cysteine 22 and cysteine 77 form a disulfide bridge.

The protein belongs to the beta-2-microglobulin family. In terms of assembly, heterodimer of an alpha chain and a beta chain. Beta-2-microglobulin is the beta-chain of major histocompatibility complex class I molecules.

The protein localises to the secreted. Functionally, component of the class I major histocompatibility complex (MHC). Involved in the presentation of peptide antigens to the immune system. In Mus caroli (Ryukyu mouse), this protein is Beta-2-microglobulin (B2m).